The sequence spans 163 residues: Nucleotide-binding protein YajQ (163 aa).

Belongs to the YajQ family.

Its function is as follows. Nucleotide-binding protein. The chain is Nucleotide-binding protein YajQ from Escherichia coli (strain K12 / DH10B).